A 30-amino-acid chain; its full sequence is Cliotide T6 (30 aa).

The segment at residues 1-30 (SIPCGESCVYIPCITTIVGCSCKDKVCYKN) is a cross-link (cyclopeptide (Ser-Asn)). 3 disulfide bridges follow: Cys4-Cys20, Cys8-Cys22, and Cys13-Cys27.

Contains 3 disulfide bonds. In terms of processing, this is a cyclic peptide. Expressed in pod but not in flower, stem, shoot, leaf, seed, root and nodule (at protein level).

In terms of biological role, probably participates in a plant defense mechanism. The protein is Cliotide T6 of Clitoria ternatea (Butterfly pea).